The following is a 485-amino-acid chain: WAS/WASL-interacting protein family member 3 (485 aa).

The span at 1 to 41 shows a compositional bias: pro residues; it reads MPVPPPPPPPPPPPPPPPPPLGAPPPPPLGAPPPPPPPGPP. The disordered stretch occupies residues 1–485; it reads MPVPPPPPPP…QLSLKALPVR (485 aa). Short sequence motifs (profilin-binding motif) lie at residues 3 to 8, 11 to 16, and 31 to 36; these read VPPPPP, PPPPPP, and APPPPP. The 18-residue stretch at 56-73 folds into the WH2 domain; it reads GRSALLADIQQGTRLRKV. At Arg-57 the chain carries Asymmetric dimethylarginine. The RLRK motif lies at 69 to 72; that stretch reads RLRK. The residue at position 161 (Ser-161) is a Phosphoserine. The segment covering 176–203 has biased composition (pro residues); the sequence is PVPPRPSVPAPPPPTPPPPPPPPLPPAS. At Ser-211 the chain carries Phosphoserine. Residues 212–246 are compositionally biased toward pro residues; it reads PPAPPTKVNPSVVPPPLPCAPPLPPPPPTPPPLPP. A compositionally biased stretch (low complexity) spans 247–262; that stretch reads ASALSDKAVRPQLAPL. 2 stretches are compositionally biased toward pro residues: residues 263 to 278 and 296 to 312; these read HLPP…PPCG and PPAP…PPLP. At Ser-392 the chain carries Phosphoserine. The span at 392–405 shows a compositional bias: polar residues; that stretch reads SPTTELSSKSQQPG. Positions 415 to 439 are enriched in basic and acidic residues; the sequence is AIDDFESKFTFHSMEDFPPPDEYKP. The short motif at 424–448 is the WASP-binding motif element; that stretch reads TFHSMEDFPPPDEYKPCQKIYPSKV.

In terms of assembly, interacts with WASL, and monomeric and filamentous actin. In terms of tissue distribution, isoform 1 is expressed in brain and testis and isoform 2 is expressed only in brain (at protein level).

The protein resides in the cytoplasm. Functionally, may be a regulator of cytoskeletal organization (Potential). May have a role in spermatogenesis. In Mus musculus (Mouse), this protein is WAS/WASL-interacting protein family member 3 (Wipf3).